A 232-amino-acid polypeptide reads, in one-letter code: GTP cyclohydrolase III (232 aa).

It belongs to the archaeal-type GTP cyclohydrolase family.

It catalyses the reaction GTP + 3 H2O = 2-amino-5-formylamino-6-(5-phospho-D-ribosylamino)pyrimidin-4(3H)-one + 2 phosphate + 2 H(+). Its function is as follows. Catalyzes the formation of 2-amino-5-formylamino-6-ribofuranosylamino-4(3H)-pyrimidinone ribonucleotide monophosphate and inorganic phosphate from GTP. Also has an independent pyrophosphate phosphohydrolase activity. This chain is GTP cyclohydrolase III, found in Saccharolobus islandicus (strain Y.N.15.51 / Yellowstone #2) (Sulfolobus islandicus).